Consider the following 215-residue polypeptide: MTCTLEKVLADAKSLVERLRDHDSAAEILIEQTTLLNKRVEAMKQYQEEIEVLNQVARHRPRSTLVMGIQQENRQIRELQQENKELHTSLEEHQSALELIMSKYREQVFRLLMASKKEDPTIVTQLREQHTNEMQAHIEKINEMATVMRKAIEVDEGRLCEDEERIKRLELENSGLRELLGISREAFLLLKRDDTSDSTSLSPLLTSTDISLRKS.

Positions 35–183 (LLNKRVEAMK…SGLRELLGIS (149 aa)) form a coiled coil.

This sequence belongs to the SIKE family.

The protein resides in the cytoplasm. This is FGFR1 oncogene partner 2 homolog (fgfr1op2) from Danio rerio (Zebrafish).